The following is a 317-amino-acid chain: Adenine deaminase (317 aa).

Positions 14, 16, and 194 each coordinate Zn(2+). Glu197 functions as the Proton donor in the catalytic mechanism. Residue Asp275 coordinates Zn(2+). Asp276 lines the substrate pocket.

This sequence belongs to the metallo-dependent hydrolases superfamily. Adenosine and AMP deaminases family. Adenine deaminase type 2 subfamily. Zn(2+) serves as cofactor.

The enzyme catalyses adenine + H2O + H(+) = hypoxanthine + NH4(+). In terms of biological role, catalyzes the hydrolytic deamination of adenine to hypoxanthine. Plays an important role in the purine salvage pathway and in nitrogen catabolism. In Pseudomonas syringae pv. syringae (strain B728a), this protein is Adenine deaminase.